Reading from the N-terminus, the 171-residue chain is Ribosome maturation factor RimM (171 aa).

One can recognise a PRC barrel domain in the interval 94-168 (NDEFYKDELI…MTIVPPEIVG (75 aa)).

The protein belongs to the RimM family. As to quaternary structure, binds ribosomal protein uS19.

The protein resides in the cytoplasm. Functionally, an accessory protein needed during the final step in the assembly of 30S ribosomal subunit, possibly for assembly of the head region. Essential for efficient processing of 16S rRNA. May be needed both before and after RbfA during the maturation of 16S rRNA. It has affinity for free ribosomal 30S subunits but not for 70S ribosomes. This is Ribosome maturation factor RimM from Anaplasma phagocytophilum (strain HZ).